A 1057-amino-acid chain; its full sequence is Exportin-1 (1057 aa).

Residues 36 to 102 form the Importin N-terminal domain; it reads AQMVLGKFQE…KNYIVSLIIR (67 aa). HEAT repeat units follow at residues 239–275, 281–321, 462–501, 506–544, 551–588, 596–633, 739–776, 781–818, 855–892, 902–925, and 926–965; these read AEPS…LNLG, AVFI…FIHT, NTQH…AQNK, RFLV…QYPR, KFLK…QCKR, EESQ…YMIA, KETL…DYRT, TRDP…TTLS, QQFK…NVSK, KTYL…KSGF, and ALEC…YVKE.

This sequence belongs to the exportin family. As to quaternary structure, component of a nuclear export receptor complex.

The protein resides in the nucleus. The protein localises to the cytoplasm. Its subcellular location is the perinuclear region. In terms of biological role, mediates the nuclear export of cellular proteins (cargos) bearing a leucine-rich nuclear export signal (NES). The protein is Exportin-1 (xpo1) of Dictyostelium discoideum (Social amoeba).